The sequence spans 485 residues: Taxane 13-alpha-hydroxylase (485 aa).

Cysteine 431 is a binding site for heme.

This sequence belongs to the cytochrome P450 family. It depends on heme as a cofactor.

It catalyses the reaction taxa-4(20),11-dien-5alpha-ol + reduced [NADPH--hemoprotein reductase] + O2 = taxa-4(20),11-dien-5alpha,13alpha-diol + oxidized [NADPH--hemoprotein reductase] + H2O + H(+). It functions in the pathway alkaloid biosynthesis; taxol biosynthesis. Functionally, involved in the transformation of a taxadienyl acetate by hydroxylation at C13 to yield taxadien-5-alpha-acetoxy-13-alpha-ol. This Taxus cuspidata (Japanese yew) protein is Taxane 13-alpha-hydroxylase (CYP725A2).